We begin with the raw amino-acid sequence, 386 residues long: MKWLLLLSLVALSECYIYKVPLVKKKSLRKNLMEQGLLQDYLKTHSINPASKYLKEAASMMATQPLENYMDMEYFGTIGIGTPPQEFTVIFDTGSSNLWVPSVYCSSPACSNHNRFNPQQSSTYQGTNQKLSVAYGTGSMTGILGYDTVQVGGITDTNQIFGLSETEPGSFLYYAPFDGILGLAYPSIASSGATPVFDNIWNQGLVSQDLFSVYLSSNDQGGSVVMFGGIDSSYFTGNLNWVPLSSETYWQITVDSITMNGQVIACSGSCQAIVDTGTSLLSGPTNAIASIQGYIGASQNANGEMVVSCSAINTLPNIVFTINGVQYPLPPSAYVLQSQQGCTSGFQGMDIPTSSGELWILGDVFIRQYFTVFDRGNNQVGLAPVA.

Positions 1–15 are cleaved as a signal peptide; sequence MKWLLLLSLVALSEC. Positions 16–60 are cleaved as a propeptide — activation peptide; the sequence is YIYKVPLVKKKSLRKNLMEQGLLQDYLKTHSINPASKYLKEAASM. The 310-residue stretch at 74 to 383 folds into the Peptidase A1 domain; sequence YFGTIGIGTP…DRGNNQVGLA (310 aa). D92 is a catalytic residue. 2 disulfide bridges follow: C105/C110 and C266/C270. Residue D275 is part of the active site. A disulfide bridge connects residues C309 and C342.

Belongs to the peptidase A1 family.

It is found in the secreted. The catalysed reaction is Preferential cleavage: hydrophobic, preferably aromatic, residues in P1 and P1' positions. Cleaves 1-Phe-|-Val-2, 4-Gln-|-His-5, 13-Glu-|-Ala-14, 14-Ala-|-Leu-15, 15-Leu-|-Tyr-16, 16-Tyr-|-Leu-17, 23-Gly-|-Phe-24, 24-Phe-|-Phe-25 and 25-Phe-|-Tyr-26 bonds in the B chain of insulin.. In terms of biological role, shows particularly broad specificity; although bonds involving phenylalanine and leucine are preferred, many others are also cleaved to some extent. The chain is Pepsin A (PGA) from Rhinolophus ferrumequinum (Greater horseshoe bat).